The following is a 307-amino-acid chain: Taste receptor type 2 member 106 (307 aa).

Residues 1-7 are Extracellular-facing; it reads MLTIPEG. A helical membrane pass occupies residues 8–28; the sequence is ILLCFITSGSVLGVLGNGFIL. Residues 29–41 are Cytoplasmic-facing; it reads HVNCTDCVRQKFS. The chain crosses the membrane as a helical span at residues 42–62; the sequence is TTGFIFTGLAISRICVICIII. Residues 63 to 81 lie on the Extracellular side of the membrane; it reads SDGYLKLFSPHMVASDAHI. The helical transmembrane segment at 82–104 threads the bilayer; it reads IGISYLWIITNHTSTCFATILNL. Residues 105-124 lie on the Cytoplasmic side of the membrane; sequence FYFLKIANFSHYIFFCLKRK. The chain crosses the membrane as a helical span at residues 125-145; sequence LNTIFIFLLGCLFISWSVAFP. At 146 to 179 the chain is on the extracellular side; that stretch reads QTVKIFNDKMKHRNTSWKFHLHKSKFIINHILLN. Asn-159 carries an N-linked (GlcNAc...) asparagine glycan. A helical transmembrane segment spans residues 180–200; sequence LGVIFFCMVAIITSFLLIISL. The Cytoplasmic portion of the chain corresponds to 201-227; it reads WKHNRKMQLYVSRFKSLNTEVHLKVMK. Residues 228–248 form a helical membrane-spanning segment; the sequence is VLISFIILLILHVIGILIETL. At 249–257 the chain is on the extracellular side; the sequence is SFLRYENKL. A helical membrane pass occupies residues 258-278; the sequence is LLILGLNFSSMYPCCHSFILI. Over 279-307 the chain is Cytoplasmic; that stretch reads LANNQLKQASLKALKQFKCHKKDKDVRET.

This sequence belongs to the G-protein coupled receptor T2R family.

The protein localises to the membrane. Its function is as follows. Putative taste receptor which may play a role in the perception of bitterness. In Rattus norvegicus (Rat), this protein is Taste receptor type 2 member 106.